We begin with the raw amino-acid sequence, 147 residues long: Small ribosomal subunit protein bS6m (147 aa).

This sequence belongs to the bacterial ribosomal protein bS6 family. In terms of assembly, component of the mitochondrial ribosome small subunit (28S) which comprises a 12S rRNA and about 30 distinct proteins.

It localises to the mitochondrion. The polypeptide is Small ribosomal subunit protein bS6m (mRpS6) (Drosophila melanogaster (Fruit fly)).